Consider the following 158-residue polypeptide: Endoribonuclease YbeY (158 aa).

Zn(2+) is bound by residues His-118, His-122, and His-128.

Belongs to the endoribonuclease YbeY family. It depends on Zn(2+) as a cofactor.

It is found in the cytoplasm. Its function is as follows. Single strand-specific metallo-endoribonuclease involved in late-stage 70S ribosome quality control and in maturation of the 3' terminus of the 16S rRNA. The protein is Endoribonuclease YbeY of Bartonella bacilliformis (strain ATCC 35685 / KC583 / Herrer 020/F12,63).